A 200-amino-acid chain; its full sequence is Large ribosomal subunit protein uL22c (200 aa).

It belongs to the universal ribosomal protein uL22 family. As to quaternary structure, part of the 50S ribosomal subunit.

The protein resides in the plastid. The protein localises to the chloroplast. Its function is as follows. This protein binds specifically to 23S rRNA. In terms of biological role, the globular domain of the protein is located near the polypeptide exit tunnel on the outside of the subunit, while an extended beta-hairpin is found that lines the wall of the exit tunnel in the center of the 70S ribosome. This Medicago sativa (Alfalfa) protein is Large ribosomal subunit protein uL22c (rpl22).